The primary structure comprises 154 residues: Myoglobin (154 aa).

Residues 2-148 (GLSDGEWELV…FRNDIAAKYK (147 aa)) enclose the Globin domain. S4 carries the phosphoserine modification. Phosphothreonine is present on T68. H94 is a heme b binding site.

It belongs to the globin family. As to quaternary structure, monomeric.

It is found in the cytoplasm. The protein localises to the sarcoplasm. It catalyses the reaction Fe(III)-heme b-[protein] + nitric oxide + H2O = Fe(II)-heme b-[protein] + nitrite + 2 H(+). The catalysed reaction is H2O2 + AH2 = A + 2 H2O. Functionally, monomeric heme protein which primary function is to store oxygen and facilitate its diffusion within muscle tissues. Reversibly binds oxygen through a pentacoordinated heme iron and enables its timely and efficient release as needed during periods of heightened demand. Depending on the oxidative conditions of tissues and cells, and in addition to its ability to bind oxygen, it also has a nitrite reductase activity whereby it regulates the production of bioactive nitric oxide. Under stress conditions, like hypoxia and anoxia, it also protects cells against reactive oxygen species thanks to its pseudoperoxidase activity. This is Myoglobin (MB) from Elephas maximus (Indian elephant).